We begin with the raw amino-acid sequence, 323 residues long: AA9 family lytic polysaccharide monooxygenase B (323 aa).

The N-terminal stretch at 1–18 (MKSFTLTTLAALAGNAAA) is a signal peptide. 2 residues coordinate Cu(2+): H19 and H97. The cysteines at positions 56 and 191 are disulfide-linked. Residues H177 and Q186 each coordinate O2. Position 188 (Y188) interacts with Cu(2+). The CBM1 domain maps to 286 to 323 (CTVQKYQQCGGQGYTGCTNCASGSTCSAVSPPYYSQCV).

Belongs to the polysaccharide monooxygenase AA9 family. Requires Cu(2+) as cofactor.

The protein localises to the secreted. The enzyme catalyses [(1-&gt;4)-beta-D-glucosyl]n+m + reduced acceptor + O2 = 4-dehydro-beta-D-glucosyl-[(1-&gt;4)-beta-D-glucosyl]n-1 + [(1-&gt;4)-beta-D-glucosyl]m + acceptor + H2O.. Is able to utilize various natural phenolic compounds as reducing agents. Most of these reducing agents are present in plants, either free or as lignin building blocks, such as sinapic acid, or as flavonoids such as catechin and dopamine. Phenolic compounds with 1,2-benzenediol and 1,2,3-benzenetriol moieties yield the highest release of oxidized and non-oxidized glucooligosaccharides from cellulose compared to monophenols or sulfur-containing compounds. Functionally, lytic polysaccharide monooxygenase (LPMO) that depolymerizes crystalline and amorphous polysaccharides via the oxidation of scissile alpha- or beta-(1-4)-glycosidic bonds, yielding C1 oxidation products. Catalysis by LPMOs requires the reduction of the active-site copper from Cu(II) to Cu(I) by a reducing agent and H(2)O(2) or O(2) as a cosubstrate. Is active on regenerated amorphous cellulose (RAC). The sequence is that of AA9 family lytic polysaccharide monooxygenase B from Thermothelomyces thermophilus (strain ATCC 42464 / BCRC 31852 / DSM 1799) (Sporotrichum thermophile).